The following is a 225-amino-acid chain: NAD(P)H-hydrate epimerase (225 aa).

A YjeF N-terminal domain is found at 9–209; it reads MQTIDNYTVE…DIGLLTPQDF (201 aa). Position 57–61 (57–61) interacts with (6S)-NADPHX; that stretch reads NNGAD. K(+)-binding residues include Asn-58 and Asp-119. (6S)-NADPHX contacts are provided by residues 123 to 129 and Asp-152; that span reads GTGLNNL. Thr-155 is a binding site for K(+).

Belongs to the NnrE/AIBP family. Requires K(+) as cofactor.

It carries out the reaction (6R)-NADHX = (6S)-NADHX. The enzyme catalyses (6R)-NADPHX = (6S)-NADPHX. In terms of biological role, catalyzes the epimerization of the S- and R-forms of NAD(P)HX, a damaged form of NAD(P)H that is a result of enzymatic or heat-dependent hydration. This is a prerequisite for the S-specific NAD(P)H-hydrate dehydratase to allow the repair of both epimers of NAD(P)HX. This chain is NAD(P)H-hydrate epimerase, found in Leuconostoc sp. (strain C2).